The primary structure comprises 269 residues: Tryptophan synthase alpha chain (269 aa).

Residues Glu-49 and Asp-60 each act as proton acceptor in the active site.

Belongs to the TrpA family. Tetramer of two alpha and two beta chains.

It carries out the reaction (1S,2R)-1-C-(indol-3-yl)glycerol 3-phosphate + L-serine = D-glyceraldehyde 3-phosphate + L-tryptophan + H2O. It participates in amino-acid biosynthesis; L-tryptophan biosynthesis; L-tryptophan from chorismate: step 5/5. The alpha subunit is responsible for the aldol cleavage of indoleglycerol phosphate to indole and glyceraldehyde 3-phosphate. The polypeptide is Tryptophan synthase alpha chain (Pseudomonas putida (strain ATCC 700007 / DSM 6899 / JCM 31910 / BCRC 17059 / LMG 24140 / F1)).